Reading from the N-terminus, the 464-residue chain is Soluble pyridine nucleotide transhydrogenase (464 aa).

D35–C44 contacts FAD.

This sequence belongs to the class-I pyridine nucleotide-disulfide oxidoreductase family. The cofactor is FAD.

The protein localises to the cytoplasm. It carries out the reaction NAD(+) + NADPH = NADH + NADP(+). Functionally, conversion of NADPH, generated by peripheral catabolic pathways, to NADH, which can enter the respiratory chain for energy generation. The chain is Soluble pyridine nucleotide transhydrogenase from Pseudomonas aeruginosa (strain LESB58).